The following is a 135-amino-acid chain: uncharacterized protein (135 aa).

This is an uncharacterized protein from Schizosaccharomyces pombe (strain 972 / ATCC 24843) (Fission yeast).